A 24-amino-acid chain; its full sequence is Aldehyde dehydrogenase gamma chain (24 aa).

Heterotrimer composed of an alpha, a beta and a gamma chain. The cofactor is [2Fe-2S] cluster.

It carries out the reaction an aldehyde + a quinone + H2O = a quinol + a carboxylate + H(+). This Comamonas testosteroni (Pseudomonas testosteroni) protein is Aldehyde dehydrogenase gamma chain.